A 325-amino-acid chain; its full sequence is Acetyl-coenzyme A carboxylase carboxyl transferase subunit alpha (325 aa).

Residues 35 to 292 enclose the CoA carboxyltransferase C-terminal domain; it reads EIEKLEARLA…DRVLRRSLKQ (258 aa).

It belongs to the AccA family. Acetyl-CoA carboxylase is a heterohexamer composed of biotin carboxyl carrier protein (AccB), biotin carboxylase (AccC) and two subunits each of ACCase subunit alpha (AccA) and ACCase subunit beta (AccD).

It localises to the cytoplasm. The enzyme catalyses N(6)-carboxybiotinyl-L-lysyl-[protein] + acetyl-CoA = N(6)-biotinyl-L-lysyl-[protein] + malonyl-CoA. Its pathway is lipid metabolism; malonyl-CoA biosynthesis; malonyl-CoA from acetyl-CoA: step 1/1. Its function is as follows. Component of the acetyl coenzyme A carboxylase (ACC) complex. First, biotin carboxylase catalyzes the carboxylation of biotin on its carrier protein (BCCP) and then the CO(2) group is transferred by the carboxyltransferase to acetyl-CoA to form malonyl-CoA. The sequence is that of Acetyl-coenzyme A carboxylase carboxyl transferase subunit alpha from Geobacillus kaustophilus (strain HTA426).